Reading from the N-terminus, the 151-residue chain is Small ribosomal subunit protein bS6 (151 aa).

The tract at residues 94-151 (EEHEQGPSAMMRKRDDDDRGERGERPRGPRPERGERGERGERGPRRPREDNIGEEGLY) is disordered. Residues 105-144 (RKRDDDDRGERGERPRGPRPERGERGERGERGPRRPREDN) are compositionally biased toward basic and acidic residues.

Belongs to the bacterial ribosomal protein bS6 family.

In terms of biological role, binds together with bS18 to 16S ribosomal RNA. In Beijerinckia indica subsp. indica (strain ATCC 9039 / DSM 1715 / NCIMB 8712), this protein is Small ribosomal subunit protein bS6.